A 265-amino-acid chain; its full sequence is Taurine import ATP-binding protein TauB (265 aa).

Residues Q7–I236 form the ABC transporter domain. Residue G41–T48 participates in ATP binding.

Belongs to the ABC transporter superfamily. Taurine importer (TC 3.A.1.17.1) family. The complex is composed of two ATP-binding proteins (TauB), two transmembrane proteins (TauC) and a solute-binding protein (TauA).

It is found in the cell inner membrane. The enzyme catalyses taurine(out) + ATP + H2O = taurine(in) + ADP + phosphate + H(+). Part of the ABC transporter complex TauABC involved in taurine import. Responsible for energy coupling to the transport system. This chain is Taurine import ATP-binding protein TauB, found in Pelagibacter ubique (strain HTCC1062).